Reading from the N-terminus, the 341-residue chain is Anthranilate phosphoribosyltransferase (341 aa).

5-phospho-alpha-D-ribose 1-diphosphate contacts are provided by residues G83, 86–87 (GD), T91, 93–96 (NIST), 111–119 (KHGNRGVSS), and S123. Residue G83 coordinates anthranilate. S95 lines the Mg(2+) pocket. N114 contacts anthranilate. Residue R169 participates in anthranilate binding. Mg(2+) is bound by residues D228 and E229.

It belongs to the anthranilate phosphoribosyltransferase family. As to quaternary structure, homodimer. Mg(2+) serves as cofactor.

It catalyses the reaction N-(5-phospho-beta-D-ribosyl)anthranilate + diphosphate = 5-phospho-alpha-D-ribose 1-diphosphate + anthranilate. It functions in the pathway amino-acid biosynthesis; L-tryptophan biosynthesis; L-tryptophan from chorismate: step 2/5. In terms of biological role, catalyzes the transfer of the phosphoribosyl group of 5-phosphorylribose-1-pyrophosphate (PRPP) to anthranilate to yield N-(5'-phosphoribosyl)-anthranilate (PRA). In Cupriavidus necator (strain ATCC 17699 / DSM 428 / KCTC 22496 / NCIMB 10442 / H16 / Stanier 337) (Ralstonia eutropha), this protein is Anthranilate phosphoribosyltransferase.